The following is a 152-amino-acid chain: Transcriptional repressor NrdR (152 aa).

The segment at 3 to 34 (CPHCHHNGSRVIDSRPAEDGMSIRRRRECVNC) is a zinc-finger region. An ATP-cone domain is found at 49–139 (LLVVKKDGTR…VYRQFKDVDA (91 aa)).

This sequence belongs to the NrdR family. Zn(2+) is required as a cofactor.

Functionally, negatively regulates transcription of bacterial ribonucleotide reductase nrd genes and operons by binding to NrdR-boxes. The protein is Transcriptional repressor NrdR of Limosilactobacillus fermentum (strain NBRC 3956 / LMG 18251) (Lactobacillus fermentum).